A 248-amino-acid chain; its full sequence is Small ribosomal subunit protein uS3 (248 aa).

The KH type-2 domain occupies 39–107 (IRQMLLKQLK…EVFINIVEIR (69 aa)). Positions 214 to 248 (AVDKRMTAESEGPSSGRPPRRDRDRDRDRDRDSAA) are disordered. Residues 232-248 (PRRDRDRDRDRDRDSAA) are compositionally biased toward basic and acidic residues.

This sequence belongs to the universal ribosomal protein uS3 family. In terms of assembly, part of the 30S ribosomal subunit. Forms a tight complex with proteins S10 and S14.

Functionally, binds the lower part of the 30S subunit head. Binds mRNA in the 70S ribosome, positioning it for translation. In Azorhizobium caulinodans (strain ATCC 43989 / DSM 5975 / JCM 20966 / LMG 6465 / NBRC 14845 / NCIMB 13405 / ORS 571), this protein is Small ribosomal subunit protein uS3.